A 510-amino-acid polypeptide reads, in one-letter code: MAASPADASRRRREKRRQLDARRSKCRIRLGGHMEQWCLLKEQLGFSLHSQLAKFLLDRYTSSGCVLCAGPEPVAPKGLQYLVLLSHAHSRECSLVPGLRGPGGQDGGLVWECSAGHTFSWGPSSGPKSPEEPNLTPLPSTDERSWCPEAKSGQEPAGLESNCDERAQEARMPRGAGPPPETFPSLGEDGEEEEEDEEEMLSDASPWTYSSSPDDEPDVPKPPPSPVTHALKDGEIAPAPAAVPAPLASPSSSASSLGSGAPGPVEVRIQPELRGTPQADQQTEPLASPGSQAQSALASAWDEDTAQIGPKRIRKAAKRELLPCDFPGCGRIFSNRQYLNHHKKYQHIHQKSFSCPEPACGKSFNFKKHLKEHVKLHSDTRDYICEFCARSFRTSSNLVIHRRIHTGEKPLQCEICGFTCRQKASLNWHRRKHAETVAALRFPCEFCGKRFEKPDSVAAHRSKSHPALLLAPQELSGPVESCSSILASASLGASEGSRSTLAPQAPILLP.

Disordered regions lie at residues 1 to 20 (MAAS…RQLD) and 121 to 306 (WGPS…EDTA). Serine 161 is modified (phosphoserine). Residues 163-172 (CDERAQEARM) show a composition bias toward basic and acidic residues. Residues 188 to 201 (EDGEEEEEDEEEML) show a composition bias toward acidic residues. A Phosphoserine modification is found at serine 225. The span at 237 to 265 (APAPAAVPAPLASPSSSASSLGSGAPGPV) shows a compositional bias: low complexity. Residues 278 to 297 (QADQQTEPLASPGSQAQSAL) show a composition bias toward polar residues. C2H2-type zinc fingers lie at residues 322 to 347 (LPCD…KYQH), 353 to 377 (FSCP…VKLH), 383 to 405 (YICE…RRIH), 411 to 433 (LQCE…RRKH), and 442 to 465 (FPCE…SKSH). Serine 464 is subject to Phosphoserine.

The protein belongs to the krueppel C2H2-type zinc-finger protein family. In terms of processing, phosphorylation at Ser-464 results in loss of DNA-binding activity.

It is found in the nucleus. May act as an transcriptional repressor for PCK1 gene expression, in turn may participate in the hepatic gluconeogenesis regulation through the activated AMPK signaling pathway. In Bos taurus (Bovine), this protein is Zinc finger protein 692.